Reading from the N-terminus, the 447-residue chain is Exodeoxyribonuclease 7 large subunit (447 aa).

The protein belongs to the XseA family. Heterooligomer composed of large and small subunits.

Its subcellular location is the cytoplasm. The catalysed reaction is Exonucleolytic cleavage in either 5'- to 3'- or 3'- to 5'-direction to yield nucleoside 5'-phosphates.. Bidirectionally degrades single-stranded DNA into large acid-insoluble oligonucleotides, which are then degraded further into small acid-soluble oligonucleotides. The polypeptide is Exodeoxyribonuclease 7 large subunit (Streptococcus mutans serotype c (strain ATCC 700610 / UA159)).